We begin with the raw amino-acid sequence, 324 residues long: Acetyl-coenzyme A carboxylase carboxyl transferase subunit alpha (324 aa).

Residues 44–297 form the CoA carboxyltransferase C-terminal domain; sequence LEERAKQLRY…KAALLRNLAE (254 aa).

Belongs to the AccA family. Acetyl-CoA carboxylase is a heterohexamer composed of biotin carboxyl carrier protein (AccB), biotin carboxylase (AccC) and two subunits each of ACCase subunit alpha (AccA) and ACCase subunit beta (AccD).

It localises to the cytoplasm. It catalyses the reaction N(6)-carboxybiotinyl-L-lysyl-[protein] + acetyl-CoA = N(6)-biotinyl-L-lysyl-[protein] + malonyl-CoA. Its pathway is lipid metabolism; malonyl-CoA biosynthesis; malonyl-CoA from acetyl-CoA: step 1/1. Its function is as follows. Component of the acetyl coenzyme A carboxylase (ACC) complex. First, biotin carboxylase catalyzes the carboxylation of biotin on its carrier protein (BCCP) and then the CO(2) group is transferred by the carboxyltransferase to acetyl-CoA to form malonyl-CoA. This is Acetyl-coenzyme A carboxylase carboxyl transferase subunit alpha from Thermosynechococcus vestitus (strain NIES-2133 / IAM M-273 / BP-1).